The sequence spans 531 residues: SWI/SNF-related matrix-associated actin-dependent regulator of chromatin subfamily D member 2 (531 aa).

2 positions are modified to asymmetric dimethylarginine: arginine 81 and arginine 104. A Phosphoserine modification is found at serine 203. The disordered stretch occupies residues 205 to 227; it reads SKAEGDTAGTTGTPGGTPAGDKV. Threonine 217 bears the Phosphothreonine mark. Lysine 226 participates in a covalent cross-link: Glycyl lysine isopeptide (Lys-Gly) (interchain with G-Cter in SUMO2). One can recognise an SWIB/MDM2 domain in the interval 306–383; it reads HQPPQYKLDP…PMKLAGLLQH (78 aa).

Belongs to the SMARCD family. Component of the multiprotein chromatin-remodeling complexes SWI/SNF: SWI/SNF-A (BAF), SWI/SNF-B (PBAF) and related complexes. The canonical complex contains a catalytic subunit (either SMARCA4/BRG1/BAF190A or SMARCA2/BRM/BAF190B), and at least SMARCE1, ACTL6A/BAF53, SMARCC1/BAF155, SMARCC2/BAF170, and SMARCB1/SNF5/BAF47. Other subunits specific to each of the complexes may also be present permitting several possible combinations developmentally and tissue specific. Component of the BAF complex, which includes at least actin (ACTB), ARID1A/BAF250A, ARID1B/BAF250B, SMARCA2/BRM, SMARCA4/BRG1, ACTL6A/BAF53, ACTL6B/BAF53B, SMARCE1/BAF57, SMARCC1/BAF155, SMARCC2/BAF170, SMARCB1/SNF5/INI1, and one or more SMARCD1/BAF60A, SMARCD2/BAF60B, or SMARCD3/BAF60C. In muscle cells, the BAF complex also contains DPF3. Component of the SWI/SNF-B (PBAF) chromatin remodeling complex, at least composed of SMARCA4/BRG1, SMARCB1/BAF47/SNF5, ACTL6A/BAF53A or ACTL6B/BAF53B, SMARCE1/BAF57, SMARCD1/BAF60A, SMARCD2/BAF60B, perhaps SMARCD3/BAF60C, SMARCC1/BAF155, SMARCC2/BAF170, PBRM1/BAF180, ARID2/BAF200 and actin (ACTB). Interacts with UNKL. Interacts with CEBPE. Ubiquitinated through a signaling process involving RAC1 and the RING finger protein UNKL.

The protein resides in the nucleus. Involved in transcriptional activation and repression of select genes by chromatin remodeling (alteration of DNA-nucleosome topology). Component of SWI/SNF chromatin remodeling complexes that carry out key enzymatic activities, changing chromatin structure by altering DNA-histone contacts within a nucleosome in an ATP-dependent manner. Critical regulator of myeloid differentiation, controlling granulocytopoiesis and the expression of genes involved in neutrophil granule formation. The polypeptide is SWI/SNF-related matrix-associated actin-dependent regulator of chromatin subfamily D member 2 (SMARCD2) (Bos taurus (Bovine)).